Reading from the N-terminus, the 4544-residue chain is Prolow-density lipoprotein receptor-related protein 1 (4544 aa).

Residues 1-19 form the signal peptide; sequence MLTPPLLLLLPLLSALVAA. The Extracellular segment spans residues 20 to 4419; sequence AIDAPKTCSP…EHVFSQQQPG (4400 aa). LDL-receptor class A domains follow at residues 25–66 and 70–110; these read KTCS…ICPQ and QRCQ…HCRE. Cystine bridges form between Cys27–Cys40, Cys34–Cys53, Cys47–Cys64, Cys72–Cys85, Cys79–Cys98, and Cys92–Cys108. Positions 111–149 constitute an EGF-like 1 domain; that stretch reads LQGNCSRLGCQHHCVPTLDGPTCYCNSSFQLQADGKTCK. A glycan (N-linked (GlcNAc...) asparagine) is linked at Asn114. Cystine bridges form between Cys115–Cys124, Cys120–Cys133, Cys135–Cys148, Cys154–Cys164, Cys160–Cys173, and Cys175–Cys188. Asn136 is a glycosylation site (N-linked (GlcNAc...) asparagine). Residues 150-189 enclose the EGF-like 2; calcium-binding domain; sequence DFDECSVYGTCSQLCTNTDGSFICGCVEGYLLQPDNRSCK. 3 N-linked (GlcNAc...) asparagine glycosylation sites follow: Asn185, Asn239, and Asn274. LDL-receptor class B repeat units lie at residues 292–334, 335–378, and 379–422; these read GNFY…DPAM, GKVF…DLVS, and RLVY…FENY. N-linked (GlcNAc...) asparagine glycosylation occurs at Asn357. The N-linked (GlcNAc...) asparagine glycan is linked to Asn446. An EGF-like 3 domain is found at 474–520; that stretch reads RSHACENDQYGKPGGCSDICLLANSHKARTCRCRSGFSLGSDGKSCK. 3 disulfides stabilise this stretch: Cys478-Cys493, Cys489-Cys504, and Cys506-Cys519. LDL-receptor class B repeat units lie at residues 571–613, 614–659, 660–710, and 711–754; these read GFIY…DWMG, DNLY…DPLN, GWMY…DIPA, and GRLY…HGNY. Asn729 carries N-linked (GlcNAc...) (complex) asparagine glycosylation. The 41-residue stretch at 803–843 folds into the EGF-like 4 domain; sequence GTNKCRVNNGGCSSLCLATPGSRQCACAEDQVLDADGVTCL. Disulfide bonds link Cys807-Cys818, Cys814-Cys827, Cys829-Cys842, Cys854-Cys866, Cys861-Cys879, Cys873-Cys890, Cys895-Cys907, Cys902-Cys920, Cys914-Cys931, Cys936-Cys948, Cys943-Cys961, Cys955-Cys971, Cys976-Cys989, Cys984-Cys1002, Cys996-Cys1011, Cys1015-Cys1027, Cys1022-Cys1040, Cys1034-Cys1051, Cys1062-Cys1075, Cys1069-Cys1088, Cys1082-Cys1097, Cys1104-Cys1118, Cys1112-Cys1131, Cys1125-Cys1140, Cys1145-Cys1159, Cys1152-Cys1172, Cys1166-Cys1182, Cys1185-Cys1196, Cys1192-Cys1206, Cys1208-Cys1221, Cys1227-Cys1237, Cys1233-Cys1246, and Cys1248-Cys1261. LDL-receptor class A domains follow at residues 852–892, 893–933, 934–973, 974–1013, 1013–1053, 1060–1099, 1102–1142, and 1143–1182; these read PQCQ…LCHQ, HTCP…TCSA, RTCPPNQFSCASGRCIPISWTCDLDDDCGDRSDESASCAY, PTCFPLTQFTCNNGRCININWRCDNDNDCGDNSDEAGCSH, HSCS…NCTN, GGCHTDEFQCRLDGLCIPLRWRCDGDTDCMDSSDEKSCEG, HVCD…NCES, and LACRPPSHPCANNTSVCLPPDKLCDGNDDCGDGSDEGELC. Residues Trp871, Asp874, Asp876, Asp878, Asp884, and Glu885 each contribute to the Ca(2+) site. The N-linked (GlcNAc...) asparagine glycan is linked to Asn928. Ca(2+)-binding residues include Trp1032, Asp1035, Asp1037, Asp1039, Asp1045, and Glu1046. An N-linked (GlcNAc...) asparagine glycan is attached at Asn1050. The Ca(2+) site is built by Trp1080, Asp1083, Asp1085, Asp1087, Asp1093, and Glu1094. 2 N-linked (GlcNAc...) asparagine glycosylation sites follow: Asn1154 and Asn1155. EGF-like domains are found at residues 1183-1222 and 1223-1262; these read DQCSLNNGGCSHNCSVAPGEGIVCSCPLGMELGPDNHTCQ and IQSYCAKHLKCSQKCDQNKFSVKCSCYEGWVLEPDGESCR. Asn1195 and Asn1218 each carry an N-linked (GlcNAc...) asparagine glycan. LDL-receptor class B repeat units follow at residues 1309-1355, 1356-1398, 1399-1445, 1446-1490, and 1491-1531; these read SALY…DWIA, GNIY…DPRD, GILF…DYLE, KRIL…YGGE, and VYWT…YHPS. N-linked (GlcNAc...) (complex) asparagine glycosylation occurs at Asn1511. The EGF-like 7 domain occupies 1536–1579; the sequence is APNPCEANGGQGPCSHLCLINYNRTVSCACPHLMKLHKDNTTCY. 3 disulfides stabilise this stretch: Cys1540–Cys1553, Cys1549–Cys1563, and Cys1565–Cys1578. N-linked (GlcNAc...) asparagine glycans are attached at residues Asn1558, Asn1575, Asn1616, and Asn1645. LDL-receptor class B repeat units follow at residues 1627 to 1669, 1670 to 1713, 1714 to 1753, and 1754 to 1798; these read QRVY…DWVS, RNLF…HPLR, GKLYWTDGDNISMANMDGSNRTLLFSGQKGPVGLAIDFPE, and SKLY…MGDK. N-linked (GlcNAc...) asparagine glycosylation is found at Asn1723, Asn1733, Asn1763, and Asn1825. The EGF-like 8 domain maps to 1846 to 1887; sequence GTNPCSVNNGDCSQLCLPTSETTRSCMCTAGYSLRSGQQACE. 3 disulfide bridges follow: Cys1850/Cys1861, Cys1857/Cys1871, and Cys1873/Cys1886. Asn1933 is a glycosylation site (N-linked (GlcNAc...) asparagine). LDL-receptor class B repeat units follow at residues 1934–1976, 1977–2019, 2020–2063, and 2064–2107; these read DTIY…DWIA, GNIY…HPEK, GYLF…DYQD, and GKLY…FEDF. N-linked (GlcNAc...) asparagine glycosylation is present at Asn1995. At Lys2009 the chain carries N6-acetyllysine. Residue Asn2048 is glycosylated (N-linked (GlcNAc...) asparagine). 2 N-linked (GlcNAc...) asparagine glycosylation sites follow: Asn2117 and Asn2127. Positions 2155 to 2195 constitute an EGF-like 9 domain; the sequence is GTNVCAVANGGCQQLCLYRGRGQRACACAHGMLAEDGASCR. 3 cysteine pairs are disulfide-bonded: Cys2159/Cys2170, Cys2166/Cys2180, and Cys2182/Cys2194. 5 LDL-receptor class B repeats span residues 2253–2294, 2295–2343, 2344–2388, 2389–2431, and 2432–2473; these read NRIF…HRGW, DTLY…DECQ, NLMF…DHRA, EKLY…YGEH, and IFWT…VAND. Asn2472 carries an N-linked (GlcNAc...) asparagine glycan. Residues 2478–2518 enclose the EGF-like 10 domain; sequence ELSPCRINNGGCQDLCLLTHQGHVNCSCRGGRILQDDLTCR. Cystine bridges form between Cys2482–Cys2493, Cys2489–Cys2503, and Cys2505–Cys2517. N-linked (GlcNAc...) asparagine glycosylation occurs at Asn2502. Residue Asn2521 is glycosylated (N-linked (GlcNAc...) asparagine). LDL-receptor class A domains lie at 2522-2563, 2564-2602, 2603-2641, 2642-2690, 2694-2732, 2732-2771, and 2772-2814; these read SSCR…YCNS, RRCKKTFRQCSNGRCVSNMLWCNGADDCGDGSDEIPCNK, TACGVGEFRCRDGTCIGNSSRCNQFVDCEDASDEMNCSA, TDCS…DCPG, PRCPLNYFACPSGRCIPMSWTCDKEDDCEHGEDETHCNK, KFCSEAQFECQNHRCISKQWLCDGSDDCGDGSDEAAHCEG, and KTCG…GCLY. Intrachain disulfides connect Cys2524/Cys2537, Cys2532/Cys2550, Cys2544/Cys2561, Cys2566/Cys2578, Cys2573/Cys2591, and Cys2585/Cys2600. An N-linked (GlcNAc...) asparagine glycan is attached at Asn2539. N-linked (GlcNAc...) asparagine glycosylation is present at Asn2601. 15 disulfides stabilise this stretch: Cys2605–Cys2617, Cys2612–Cys2630, Cys2624–Cys2639, Cys2644–Cys2666, Cys2660–Cys2679, Cys2673–Cys2688, Cys2696–Cys2708, Cys2703–Cys2721, Cys2715–Cys2730, Cys2734–Cys2746, Cys2741–Cys2759, Cys2753–Cys2769, Cys2774–Cys2787, Cys2781–Cys2800, and Cys2794–Cys2812. N-linked (GlcNAc...) asparagine glycosylation is found at Asn2620 and Asn2638. Asn2815 carries an N-linked (GlcNAc...) asparagine glycan. 3 consecutive LDL-receptor class A domains span residues 2816–2855, 2856–2899, and 2902–2940; these read STCDDREFMCQNRQCIPKHFVCDHDRDCADGSDESPECEY, PTCG…HCTS, and HKCNASSQFLCSSGRCVAEALLCNGQDDCGDSSDERGCH. 15 cysteine pairs are disulfide-bonded: Cys2818–Cys2830, Cys2825–Cys2843, Cys2837–Cys2853, Cys2858–Cys2870, Cys2865–Cys2884, Cys2878–Cys2897, Cys2904–Cys2917, Cys2912–Cys2930, Cys2924–Cys2939, Cys2944–Cys2956, Cys2952–Cys2965, Cys2967–Cys2980, Cys2986–Cys2996, Cys2992–Cys3005, and Cys3007–Cys3021. Asn2905 carries N-linked (GlcNAc...) asparagine glycosylation. Residues 2941–2981 enclose the EGF-like 11 domain; sequence INECLSRKLSGCSQDCEDLKIGFKCRCRPGFRLKDDGRTCA. One can recognise an EGF-like 12; calcium-binding domain in the interval 2982–3022; sequence DVDECSTTFPCSQRCINTHGSYKCLCVEGYAPRGGDPHSCK. Residues Asn3048 and Asn3089 are each glycosylated (N-linked (GlcNAc...) asparagine). LDL-receptor class B repeat units follow at residues 3069–3113, 3114–3156, 3157–3200, 3201–3243, and 3244–3284; these read QMIY…DWVG, GNLY…DVQN, GYLY…DYVT, ERIY…FEDY, and VYWT…FHAL. N-linked (GlcNAc...) asparagine glycosylation is present at Asn3264. In terms of domain architecture, EGF-like 13 spans 3290-3331; it reads PNHPCKVNNGGCSNLCLLSPGGGHKCACPTNFYLGSDGRTCV. 3 cysteine pairs are disulfide-bonded: Cys3294–Cys3305, Cys3301–Cys3315, and Cys3317–Cys3330. 11 LDL-receptor class A domains span residues 3332-3371, 3372-3410, 3411-3450, 3451-3491, 3492-3533, 3534-3572, 3573-3611, 3611-3649, 3652-3692, 3693-3733, and 3739-3778; these read SNCTASQFVCKNDKCIPFWWKCDTEDDCGDHSDEPPDCPE, FKCRPGQFQCSTGICTNPAFICDGDNDCQDNSDEANCDI, HVCLPSQFKCTNTNRCIPGIFRCNGQDNCGDGEDERDCPE, VTCA…NCTQ, MTCG…ECDE, RTCEPYQFRCKNNRCVPGRWQCDYDNDCGDNSDEESCTP, RPCSESEFSCANGRCIAGRWKCDGDHDCADGSDEKDCTP, PRCDMDQFQCKSGHCIPLRWRCDADADCMDGSDEEACGT, RTCP…ECAR, FVCP…DCEP, and THCKDKKEFLCRNQRCLSSSLRCNMFDDCGDGSDEEDCSI. Residue Asn3333 is glycosylated (N-linked (GlcNAc...) asparagine). 39 disulfides stabilise this stretch: Cys3334-Cys3346, Cys3341-Cys3359, Cys3353-Cys3369, Cys3374-Cys3386, Cys3381-Cys3399, Cys3393-Cys3408, Cys3413-Cys3426, Cys3420-Cys3439, Cys3433-Cys3448, Cys3453-Cys3466, Cys3460-Cys3479, Cys3473-Cys3489, Cys3494-Cys3507, Cys3501-Cys3520, Cys3514-Cys3531, Cys3536-Cys3548, Cys3543-Cys3561, Cys3555-Cys3570, Cys3575-Cys3587, Cys3582-Cys3600, Cys3594-Cys3609, Cys3613-Cys3625, Cys3620-Cys3638, Cys3632-Cys3647, Cys3654-Cys3666, Cys3661-Cys3679, Cys3673-Cys3690, Cys3695-Cys3709, Cys3703-Cys3722, Cys3716-Cys3731, Cys3741-Cys3754, Cys3749-Cys3767, Cys3761-Cys3776, Cys3785-Cys3798, Cys3792-Cys3807, Cys3809-Cys3822, Cys3828-Cys3838, Cys3834-Cys3847, and Cys3849-Cys3860. The N-linked (GlcNAc...) asparagine glycan is linked to Asn3488. Asn3662 carries N-linked (GlcNAc...) asparagine glycosylation. EGF-like domains are found at residues 3781–3823 and 3824–3861; these read KLTS…PGCQ and DINECLRFGTCSQLCNNTKGGHLCSCARNFMKTHNTCK. Residue Asn3788 is glycosylated (N-linked (GlcNAc...) asparagine). A glycan (N-linked (GlcNAc...) asparagine) is linked at Asn3839. 4 LDL-receptor class B repeats span residues 3912-3954, 3970-4012, 4013-4056, and 4057-4101; these read GRVY…HLNI, GNVY…DPLR, GTMY…DYHN, and ERLY…FEDY. The Recognition site for proteolytical processing signature appears at 3940-3943; sequence RHRR. Asn3953 carries N-linked (GlcNAc...) asparagine glycosylation. 2 N-linked (GlcNAc...) asparagine glycosylation sites follow: Asn4075 and Asn4125. EGF-like domains are found at residues 4147-4183, 4196-4232, 4232-4268, 4268-4304, 4304-4340, 4340-4375, and 4373-4409; these read VTNPCDRKKCEWLCLLSPSGPVCTCPNGKRLDNGTCV, RPGTCNLQCFNGGSCFLNARRQPKCRCQPRYTGDKCE, ELDQCWEHCRNGGTCAASPSGMPTCRCPTGFTGPKCT, TQQVCAGYCANNSTCTVNQGNQPQCRCLPGFLGDRCQ, QYRQCSGYCENFGTCQMAADGSRQCRCTAYFEGSRCE, EVNKCSRCLEGACVVNKQSGDVTCNCTDGRVAPSCL, and SCLTCVGHCSNGGSCTMNSKMMPECQCPPHMTGPRCE. 17 cysteine pairs are disulfide-bonded: Cys4151–Cys4160, Cys4156–Cys4169, Cys4171–Cys4182, Cys4200–Cys4210, Cys4204–Cys4220, Cys4222–Cys4231, Cys4236–Cys4246, Cys4240–Cys4256, Cys4258–Cys4267, Cys4272–Cys4282, Cys4276–Cys4292, Cys4294–Cys4303, Cys4308–Cys4318, Cys4312–Cys4328, Cys4330–Cys4339, Cys4344–Cys4352, and Cys4347–Cys4363. Asn4179 carries an N-linked (GlcNAc...) asparagine glycan. Asn4278 and Asn4279 each carry an N-linked (GlcNAc...) asparagine glycan. N-linked (GlcNAc...) asparagine glycosylation occurs at Asn4364. Disulfide bonds link Cys4365-Cys4374, Cys4377-Cys4387, Cys4381-Cys4397, and Cys4399-Cys4408. A helical membrane pass occupies residues 4420–4444; sequence HIASILIPLLLLLLLVLVAGVVFWY. Over 4445 to 4544 the chain is Cytoplasmic; it reads KRRVQGAKGF…PEDEIGDPLA (100 aa). Residues 4445–4544 are interaction with MAFB; it reads KRRVQGAKGF…PEDEIGDPLA (100 aa). Thr4460 carries the phosphothreonine modification. The short motif at 4502-4507 is the NPXY motif element; sequence FTNPVY. The residue at position 4507 (Tyr4507) is a Phosphotyrosine. A phosphoserine mark is found at Ser4517, Ser4520, and Ser4523.

It belongs to the LDLR family. In terms of assembly, heterodimer of an 85-kDa membrane-bound carboxyl subunit and a non-covalently attached 515-kDa N-terminal subunit. Intracellular domain interacts with MAFB. Found in a complex with PID1/PCLI1, LRP1 and CUBNI. Interacts with SNX17, PID1/PCLI1, PDGF and CUBN. The intracellular domain interacts with SHC1, GULP1 and DAB1. Can weakly interact (via NPXY motif) with DAB2 (via PID domain); the interaction is enhanced by tyrosine phosphorylation of the NPXY motif. Interacts with MDK; promotes neuronal survival. Interacts with LRPAP1; this interaction is followed by rapid internalization. Interacts with uPA/PLAU and PAI1/SERPINE1, either individually or in complex with each other, leading to rapid endocytosis; this interaction is abolished in the presence of LRPAP1/RAP. Also interacts with tPA/PLAT alone or in complex with SERPINE1. Interacts with the urokinase receptor PLAUR; this interaction leads to PLAUR internalization and is impaired in the presence of SORL1. Interacts with PDGFB. Interacts with TAU/MAPT, leading to endocytosis; this interaction is reduced in the presence of LRPAP1/RAP. Interacts with IGFBP3; this interaction mediates cell growth inhibition independently of IGF1. Interacts with ADGRG6. (Microbial infection) Interacts with bacterial exotoxins. As to quaternary structure, (Microbial infection) Interacts with Rift valley fever virus (RVFV) glycoprotein N; this interaction facilitates virus entry. Cleaved into a 85 kDa membrane-spanning subunit (LRP-85) and a 515 kDa large extracellular domain (LRP-515) that remains non-covalently associated. Gamma-secretase-dependent cleavage of LRP-85 releases the intracellular domain from the membrane. In terms of processing, the N-terminus is blocked. Post-translationally, phosphorylated on serine and threonine residues. Phosphorylated on tyrosine residues upon stimulation with PDGF. Tyrosine phosphorylation promotes interaction with SHC1. As to expression, most abundant in liver, brain and lung.

It localises to the cell membrane. It is found in the membrane. The protein resides in the coated pit. Its subcellular location is the cytoplasm. The protein localises to the nucleus. It localises to the golgi outpost. It is found in the cytoskeleton. The protein resides in the microtubule organizing center. Functionally, endocytic receptor involved in endocytosis and in phagocytosis of apoptotic cells. Required for early embryonic development. Involved in cellular lipid homeostasis. Involved in the plasma clearance of chylomicron remnants and activated LRPAP1 (alpha 2-macroglobulin), as well as the local metabolism of complexes between plasminogen activators and their endogenous inhibitors. Acts as an LRPAP1 alpha-2-macroglobulin receptor. Acts as TAU/MAPT receptor and controls the endocytosis of TAU/MAPT as well as its subsequent spread. May modulate cellular events, such as APP metabolism, kinase-dependent intracellular signaling, neuronal calcium signaling as well as neurotransmission. Also acts as a receptor for IGFBP3 to mediate cell growth inhibition. (Microbial infection) Functions as a receptor for Pseudomonas aeruginosa exotoxin A. This Homo sapiens (Human) protein is Prolow-density lipoprotein receptor-related protein 1.